The sequence spans 222 residues: Phosphoribosylformylglycinamidine synthase subunit PurQ (222 aa).

Residues 3–222 (SAVIQLPGLN…LFESVLGRAA (220 aa)) enclose the Glutamine amidotransferase type-1 domain. Residue Cys-86 is the Nucleophile of the active site. Residues His-196 and Glu-198 contribute to the active site.

Part of the FGAM synthase complex composed of 1 PurL, 1 PurQ and 2 PurS subunits.

It is found in the cytoplasm. It catalyses the reaction N(2)-formyl-N(1)-(5-phospho-beta-D-ribosyl)glycinamide + L-glutamine + ATP + H2O = 2-formamido-N(1)-(5-O-phospho-beta-D-ribosyl)acetamidine + L-glutamate + ADP + phosphate + H(+). The catalysed reaction is L-glutamine + H2O = L-glutamate + NH4(+). It participates in purine metabolism; IMP biosynthesis via de novo pathway; 5-amino-1-(5-phospho-D-ribosyl)imidazole from N(2)-formyl-N(1)-(5-phospho-D-ribosyl)glycinamide: step 1/2. Part of the phosphoribosylformylglycinamidine synthase complex involved in the purines biosynthetic pathway. Catalyzes the ATP-dependent conversion of formylglycinamide ribonucleotide (FGAR) and glutamine to yield formylglycinamidine ribonucleotide (FGAM) and glutamate. The FGAM synthase complex is composed of three subunits. PurQ produces an ammonia molecule by converting glutamine to glutamate. PurL transfers the ammonia molecule to FGAR to form FGAM in an ATP-dependent manner. PurS interacts with PurQ and PurL and is thought to assist in the transfer of the ammonia molecule from PurQ to PurL. This Chelativorans sp. (strain BNC1) protein is Phosphoribosylformylglycinamidine synthase subunit PurQ.